A 257-amino-acid polypeptide reads, in one-letter code: Fimbrial assembly protein, serogroup I (257 aa).

The protein is Fimbrial assembly protein, serogroup I (fimB) of Dichelobacter nodosus (Bacteroides nodosus).